A 698-amino-acid chain; its full sequence is Phenylalanine aminomutase (L-beta-phenylalanine forming) (698 aa).

Tyr80 serves as the catalytic Proton donor/acceptor. A cross-link (5-imidazolinone (Ala-Gly)) is located at residues 175–177; it reads ASG. Ser176 carries the post-translational modification 2,3-didehydroalanine (Ser). The (E)-cinnamate site is built by Asn231, Gln319, Arg325, Asn355, Lys427, Glu455, and Asn458.

Belongs to the PAL/histidase family. As to quaternary structure, homotetramer. Contains an active site 4-methylidene-imidazol-5-one (MIO), which is formed autocatalytically by cyclization and dehydration of residues Ala-Ser-Gly.

The protein resides in the cytoplasm. The catalysed reaction is L-phenylalanine = L-beta-phenylalanine. It carries out the reaction L-phenylalanine = (E)-cinnamate + NH4(+). It participates in alkaloid biosynthesis; taxol biosynthesis. It functions in the pathway phenylpropanoid metabolism; trans-cinnamate biosynthesis; trans-cinnamate from L-phenylalanine: step 1/1. Phenylalanine aminomutase that catalyzes the rearrangement of L-phenylalanine to R-beta-phenylalanine. Catalyzes the first committed step in the biosynthesis of the side chain of the alkaloid taxol (paclitaxel), a widely-used compound with antitumor activity. Also has low phenylalanine ammonia-lyase activity. The chain is Phenylalanine aminomutase (L-beta-phenylalanine forming) (pam) from Taxus canadensis (Canadian yew).